A 291-amino-acid chain; its full sequence is Kidney mitochondrial carrier protein 1 (291 aa).

Residue S2 is modified to N-acetylserine. Solcar repeat units follow at residues 7-96 (KPFV…LKRL), 104-189 (ETLL…TKKH), and 198-289 (DTVA…LKKL). The next 6 helical transmembrane spans lie at 9 to 26 (FVYG…TFPI), 71 to 89 (GIAP…KIGT), 106 to 124 (LLVN…SAIA), 164 to 183 (GVSL…LPVY), 204 to 224 (FLSS…VDVV), and 264 to 283 (GFWP…FLTY).

This sequence belongs to the mitochondrial carrier (TC 2.A.29) family. Interacts with VDAC1. As to expression, present in kidney (at protein level). Expressed predominantly within the kidney cortex in the proximal and distal tubules and at lower levels in the testis and white adipose tissue.

The protein resides in the mitochondrion inner membrane. It carries out the reaction sulfite(in) + sulfate(out) = sulfite(out) + sulfate(in). The catalysed reaction is thiosulfate(in) + sulfate(out) = thiosulfate(out) + sulfate(in). The enzyme catalyses sulfate(out) + phosphate(in) = sulfate(in) + phosphate(out). It catalyses the reaction oxalate(in) + sulfate(out) = oxalate(out) + sulfate(in). It carries out the reaction malonate(in) + sulfate(out) = malonate(out) + sulfate(in). The catalysed reaction is maleate(in) + sulfate(out) = maleate(out) + sulfate(in). The enzyme catalyses (S)-malate(in) + sulfate(out) = (S)-malate(out) + sulfate(in). It catalyses the reaction (3S)-citramalate(in) + sulfate(out) = (3S)-citramalate(out) + sulfate(in). It carries out the reaction (3R)-citramalate(in) + sulfate(out) = (3R)-citramalate(out) + sulfate(in). The catalysed reaction is sulfate(out) + succinate(in) = sulfate(in) + succinate(out). The enzyme catalyses (S,S)-tartrate(in) + sulfate(out) = (S,S)-tartrate(out) + sulfate(in). It catalyses the reaction (2R,3R)-tartrate(in) + sulfate(out) = (2R,3R)-tartrate(out) + sulfate(in). It carries out the reaction D-aspartate(in) + sulfate(out) = D-aspartate(out) + sulfate(in). The catalysed reaction is L-aspartate(in) + sulfate(out) = L-aspartate(out) + sulfate(in). The enzyme catalyses sulfate(in) = sulfate(out). It catalyses the reaction phosphate(in) = phosphate(out). It carries out the reaction (S)-malate(out) = (S)-malate(in). Antiporter that transports inorganic anions (sulfate, sulfite, thiosulfate and phosphate) and, to a lesser extent, a variety of dicarboxylates (e.g. malonate, malate and citramalate) and, even more so, aspartate. The sulfate/sulfate exchange is much higher than the phosphate/phosphate and malate/malate exchanges. The transport affinities is higher for sulfate and thiosulfate than for any other substrate. May catalyze the export of sulfite and thiosulfate (the hydrogen sulfide degradation products) from the mitochondria, thereby modulating the level of the hydrogen sulfide. Also may mediate a very low unidirectional transport of sulfate, phosphate and (S)-malate. The polypeptide is Kidney mitochondrial carrier protein 1 (Mus musculus (Mouse)).